Reading from the N-terminus, the 569-residue chain is Archaeosine synthase (569 aa).

Positions 495–569 (SGGKDINYIE…ALVNIRNVKS (75 aa)) constitute a PUA domain.

The protein belongs to the archaeosine synthase type 1 family. Homodimer.

It carries out the reaction 7-cyano-7-carbaguanosine(15) in tRNA + L-glutamine + H2O = archaeosine(15) in tRNA + L-glutamate. The protein operates within tRNA modification; archaeosine-tRNA biosynthesis. Its function is as follows. Is responsible for the final step in the biosynthesis of archaeosine, a modified nucleoside present in the dihydrouridine loop (D-loop) of archaeal tRNA. Catalyzes the conversion of 7-cyano-7-deazaguanine (preQ0)-modified tRNA to archaeosine-tRNA, transforming a nitrile group to a formamidine group. Can use either glutamine, asparagine or ammonium as amino donor. The chain is Archaeosine synthase from Methanocaldococcus jannaschii (strain ATCC 43067 / DSM 2661 / JAL-1 / JCM 10045 / NBRC 100440) (Methanococcus jannaschii).